Consider the following 62-residue polypeptide: Putative antitoxin AF_1095 (62 aa).

Belongs to the UPF0165 family.

Possibly the antitoxin component of a type II toxin-antitoxin (TA) system. This chain is Putative antitoxin AF_1095, found in Archaeoglobus fulgidus (strain ATCC 49558 / DSM 4304 / JCM 9628 / NBRC 100126 / VC-16).